The chain runs to 378 residues: Queuine tRNA-ribosyltransferase (378 aa).

Residue Asp-91 is the Proton acceptor of the active site. Substrate contacts are provided by residues 91–95, Asp-145, Gln-189, and Gly-216; that span reads DSGGF. The interval 247–253 is RNA binding; the sequence is GVGKPED. Asp-266 acts as the Nucleophile in catalysis. The tract at residues 271–275 is RNA binding; important for wobble base 34 recognition; that stretch reads TRNAR. Zn(2+)-binding residues include Cys-304, Cys-306, Cys-309, and His-335.

Belongs to the queuine tRNA-ribosyltransferase family. In terms of assembly, homodimer. Within each dimer, one monomer is responsible for RNA recognition and catalysis, while the other monomer binds to the replacement base PreQ1. Zn(2+) is required as a cofactor.

The catalysed reaction is 7-aminomethyl-7-carbaguanine + guanosine(34) in tRNA = 7-aminomethyl-7-carbaguanosine(34) in tRNA + guanine. It participates in tRNA modification; tRNA-queuosine biosynthesis. Its function is as follows. Catalyzes the base-exchange of a guanine (G) residue with the queuine precursor 7-aminomethyl-7-deazaguanine (PreQ1) at position 34 (anticodon wobble position) in tRNAs with GU(N) anticodons (tRNA-Asp, -Asn, -His and -Tyr). Catalysis occurs through a double-displacement mechanism. The nucleophile active site attacks the C1' of nucleotide 34 to detach the guanine base from the RNA, forming a covalent enzyme-RNA intermediate. The proton acceptor active site deprotonates the incoming PreQ1, allowing a nucleophilic attack on the C1' of the ribose to form the product. After dissociation, two additional enzymatic reactions on the tRNA convert PreQ1 to queuine (Q), resulting in the hypermodified nucleoside queuosine (7-(((4,5-cis-dihydroxy-2-cyclopenten-1-yl)amino)methyl)-7-deazaguanosine). This Vibrio vulnificus (strain CMCP6) protein is Queuine tRNA-ribosyltransferase.